We begin with the raw amino-acid sequence, 121 residues long: MAKTSSSSSSSNREWSSSLLLSPKVDCPSKTFSLLEAKSSTSFKPYGLISSPTSEVLVLFEPLRTILFYTPTLICFLFLQNFLYKSISEMSYDEMSFIIEFFFIAEAQFENFSSALQSPIF.

Residues 65 to 84 (TILFYTPTLICFLFLQNFLY) form a helical membrane-spanning segment.

The protein resides in the membrane. This is an uncharacterized protein from Saccharomyces cerevisiae (strain ATCC 204508 / S288c) (Baker's yeast).